Here is a 364-residue protein sequence, read N- to C-terminus: Heme A synthase (364 aa).

Helical transmembrane passes span Ala-25 to Gly-45, Phe-111 to Gly-131, Trp-139 to Val-159, Leu-174 to Gly-194, Ala-212 to Leu-232, Val-270 to Val-290, Ser-305 to Leu-325, and Val-327 to Val-347. Residue His-274 coordinates heme. His-335 serves as a coordination point for heme.

The protein belongs to the COX15/CtaA family. Type 2 subfamily. In terms of assembly, interacts with CtaB. It depends on heme b as a cofactor.

It localises to the cell membrane. It catalyses the reaction Fe(II)-heme o + 2 A + H2O = Fe(II)-heme a + 2 AH2. It participates in porphyrin-containing compound metabolism; heme A biosynthesis; heme A from heme O: step 1/1. Functionally, catalyzes the conversion of heme O to heme A by two successive hydroxylations of the methyl group at C8. The first hydroxylation forms heme I, the second hydroxylation results in an unstable dihydroxymethyl group, which spontaneously dehydrates, resulting in the formyl group of heme A. The polypeptide is Heme A synthase (Allorhizobium ampelinum (strain ATCC BAA-846 / DSM 112012 / S4) (Agrobacterium vitis (strain S4))).